Consider the following 126-residue polypeptide: 13 kDa ribonucleoprotein-associated protein (126 aa).

This sequence belongs to the eukaryotic ribosomal protein eL8 family. As to quaternary structure, component of the U3 snoRNP particle. Binds to the C'/D and B/C motifs in U3 snoRNA. Component of the 25S U4/U6.U5 tri-snRNP particle, a subcomplex of the spliceosome. Binds to the 5' stem-loop of U4 snRNA.

Its subcellular location is the nucleus. It localises to the nucleolus. Its function is as follows. Common component of the spliceosome and rRNA processing machinery. In association with the spliceosomal U4/U6.U5 tri-snRNP particle, required for splicing of pre-mRNA. In association with box C/D snoRNPs, required for processing of pre-ribosomal RNA (rRNA) and site-specific 2'-O-methylation of substrate RNAs. Essential for the accumulation and stability of U4 snRNA, U6 snRNA, and box C/D snoRNAs. This is 13 kDa ribonucleoprotein-associated protein (SNU13) from Kluyveromyces lactis (strain ATCC 8585 / CBS 2359 / DSM 70799 / NBRC 1267 / NRRL Y-1140 / WM37) (Yeast).